A 243-amino-acid polypeptide reads, in one-letter code: Amphiregulin (243 aa).

An N-terminal signal peptide occupies residues 1–24 (MRTPSLSLALSVLSLLVLGSGHYA). A propeptide spanning residues 25 to 96 (AGLELNGTSS…IVDDSVRVEQ (72 aa)) is cleaved from the precursor. N-linked (GlcNAc...) asparagine glycosylation is present at N30. The span at 55-67 (STISEMPSGSELS) shows a compositional bias: polar residues. Disordered stretches follow at residues 55-75 (STIS…DYSE) and 98-135 (IKPK…KKKN). The span at 98-113 (IKPKENKTEGEKSSEK) shows a compositional bias: basic and acidic residues. N103 carries an N-linked (GlcNAc...) asparagine glycan. Over residues 114-135 (PKRKKKGGKGGKGRRNRKKKKN) the composition is skewed to basic residues. The EGF-like domain maps to 133–173 (KKNPCAAKFQNFCIHGECRYIENLEVVTCHCHQDYFGERCG). Intrachain disulfides connect C137-C150, C145-C161, and C163-C172. A helical membrane pass occupies residues 190–213 (IALAAIIVFVSAVSVAAIGIITAV). N-linked (GlcNAc...) asparagine glycosylation is present at N236.

The protein belongs to the amphiregulin family. The immature precursor interacts with CNIH.

Its subcellular location is the membrane. Functionally, ligand of the EGF receptor/EGFR. Autocrine growth factor as well as a mitogen for a broad range of target cells including astrocytes, Schwann cells and fibroblasts. In Rattus norvegicus (Rat), this protein is Amphiregulin (Areg).